A 108-amino-acid polypeptide reads, in one-letter code: UPF0102 protein Sama_3355 (108 aa).

This sequence belongs to the UPF0102 family.

The chain is UPF0102 protein Sama_3355 from Shewanella amazonensis (strain ATCC BAA-1098 / SB2B).